The chain runs to 196 residues: Probable GTP-binding protein EngB (196 aa).

An EngB-type G domain is found at 21–195; sequence DVSEICLIGR…YELINKLLGS (175 aa). GTP contacts are provided by residues 29-36, 56-60, 75-78, 142-145, and 174-176; these read GRSNVGKS, GKTRL, DAPG, TKLD, and ISN. Residues Ser36 and Thr58 each coordinate Mg(2+).

This sequence belongs to the TRAFAC class TrmE-Era-EngA-EngB-Septin-like GTPase superfamily. EngB GTPase family. Requires Mg(2+) as cofactor.

In terms of biological role, necessary for normal cell division and for the maintenance of normal septation. This Mycoplasma capricolum subsp. capricolum (strain California kid / ATCC 27343 / NCTC 10154) protein is Probable GTP-binding protein EngB.